Reading from the N-terminus, the 37-residue chain is Large ribosomal subunit protein bL36c (37 aa).

This sequence belongs to the bacterial ribosomal protein bL36 family.

Its subcellular location is the plastid. It localises to the chloroplast. The protein is Large ribosomal subunit protein bL36c of Welwitschia mirabilis (Tree tumbo).